The chain runs to 852 residues: Cell surface glycoprotein (852 aa).

The first 34 residues, 1 to 34, serve as a signal peptide directing secretion; sequence MTDTTGKLRAVLLTALMVGSVIGAGVAFTGGAAA. An N-linked (GalNAc...) (glycosaminoglycan) asparagine glycan is attached at Asn-36. The segment at 84–131 is disordered; the sequence is KLDNEKEVSPATLSRTGGSDEGVPLQMPIPEDQSTGSYDSNGPDNDEA. The segment covering 115–126 has biased composition (polar residues); that stretch reads DQSTGSYDSNGP. N-linked (Glc...) asparagine glycans are attached at residues Asn-339, Asn-398, Asn-438, Asn-513, Asn-643, Asn-727, Asn-751, and Asn-787. A disordered region spans residues 772–828; the sequence is ELEEPDQTTVDQPENNQTMTTTMTETTTETTTEMTTTQENTTENGSEGTSDGESGGS. The segment covering 785 to 823 has biased composition (low complexity); that stretch reads ENNQTMTTTMTETTTETTTEMTTTQENTTENGSEGTSDG. 14 O-linked (Gal...) threonine glycosylation sites follow: Thr-789, Thr-791, Thr-792, Thr-793, Thr-795, Thr-797, Thr-798, Thr-799, Thr-801, Thr-802, Thr-803, Thr-806, Thr-807, and Thr-808. Asn-811 carries N-linked (Glc...) asparagine glycosylation. 2 O-linked (Gal...) threonine glycosylation sites follow: Thr-812 and Thr-813. An N-linked (Glc...) asparagine glycan is attached at Asn-815. A helical transmembrane segment spans residues 829–849; the sequence is IPGFGVGVALVAVLGAALLAL. The PGF sorting signal motif lies at 830–832; it reads PGF.

The protein belongs to the halobacterial S-layer protein family. In terms of processing, N-linked glycan at Asn-36 consists of a glycosaminoglycan chain, constructed by a repeating sulfated pentasaccharide block composed of GlcNAc, GalNAc, Gal, GalA, 3-O-methyl-GalA, and sulfate in the molar ratio of 1:1:1:1:1:2; the other N-linked glycans contain Glc, GlcA and IdoA. O-linked glycans consist of Glc-Gal disaccharides. Post-translationally, the C-terminus (residues 770-778) is lipidated with diphytanylglyceryl phosphate. In terms of processing, cleaved by the archaeosortase ArtA at the C-terminus, with removal of a short hydrophobic segment.

It is found in the secreted. Its subcellular location is the cell wall. The protein localises to the S-layer. It localises to the cell membrane. Functionally, S-layer protein. The S-layer is a paracrystalline mono-layered assembly of proteins which coat the surface of the cell. The polypeptide is Cell surface glycoprotein (csg) (Halobacterium salinarum (strain ATCC 29341 / DSM 671 / R1)).